The sequence spans 354 residues: tRNA N6-adenosine threonylcarbamoyltransferase (354 aa).

Residues His111 and His115 each coordinate Fe cation. Residues 134–138 (LVSGG), Asp167, Gly180, and Asn279 contribute to the substrate site. Asp319 is a binding site for Fe cation.

Belongs to the KAE1 / TsaD family. Requires Fe(2+) as cofactor.

The protein resides in the cytoplasm. The catalysed reaction is L-threonylcarbamoyladenylate + adenosine(37) in tRNA = N(6)-L-threonylcarbamoyladenosine(37) in tRNA + AMP + H(+). In terms of biological role, required for the formation of a threonylcarbamoyl group on adenosine at position 37 (t(6)A37) in tRNAs that read codons beginning with adenine. Is involved in the transfer of the threonylcarbamoyl moiety of threonylcarbamoyl-AMP (TC-AMP) to the N6 group of A37, together with TsaE and TsaB. TsaD likely plays a direct catalytic role in this reaction. In Neisseria meningitidis serogroup B (strain ATCC BAA-335 / MC58), this protein is tRNA N6-adenosine threonylcarbamoyltransferase.